The sequence spans 57 residues: Large ribosomal subunit protein bL32A (57 aa).

Residues M1–L22 are disordered. Basic residues predominate over residues R7 to E20.

It belongs to the bacterial ribosomal protein bL32 family.

The sequence is that of Large ribosomal subunit protein bL32A (rpmF1) from Enterococcus faecalis (strain ATCC 700802 / V583).